The following is a 464-amino-acid chain: Asparagine--tRNA ligase (464 aa).

This sequence belongs to the class-II aminoacyl-tRNA synthetase family. Homodimer.

It is found in the cytoplasm. The catalysed reaction is tRNA(Asn) + L-asparagine + ATP = L-asparaginyl-tRNA(Asn) + AMP + diphosphate + H(+). This is Asparagine--tRNA ligase from Clostridium beijerinckii (strain ATCC 51743 / NCIMB 8052) (Clostridium acetobutylicum).